The chain runs to 167 residues: Endoribonuclease YbeY (167 aa).

The tract at residues 64 to 101 (GKPTNVLSWPSEERASEEPGMAPEPPEPGDPEDPEPLG) is disordered. Acidic residues predominate over residues 90–99 (EPGDPEDPEP). Histidine 131, histidine 135, and histidine 141 together coordinate Zn(2+).

Belongs to the endoribonuclease YbeY family. Zn(2+) is required as a cofactor.

The protein localises to the cytoplasm. Single strand-specific metallo-endoribonuclease involved in late-stage 70S ribosome quality control and in maturation of the 3' terminus of the 16S rRNA. This chain is Endoribonuclease YbeY, found in Cereibacter sphaeroides (strain ATCC 17023 / DSM 158 / JCM 6121 / CCUG 31486 / LMG 2827 / NBRC 12203 / NCIMB 8253 / ATH 2.4.1.) (Rhodobacter sphaeroides).